The sequence spans 956 residues: NKSKKRRNRVSFLGVATIEPPKPIPLTWKTEKLVWVNQWPLPKQKLEALHLLANEQLEKGHIEPSFSPWNSPVFVIQKKSGKWRMLTDLRAVNAVIQPMGPLQPGLPSPAMIPKDWPLIIIDLKDCFFTIPLAEQDCEKFAFTIPAINNKEPATRFQWKVLPQGMLNSPTICQTFVGRALQPVRKKFSDCYIIHYIDDILCAAETKDKLIDCYTFLQAEVASAGLAIASDKIQTSTPFHYLGMQIENRKIKPQKIEIRKDTLKTLNDFQKLLGDINWIQPTLGIPTYAMSNLFSILRGDSDLNSKRILTPEATKEIKLVEEKIQSAQINRIDPLAPLQLLIFATAHSPTGIIIQNTDLVEWSFLPHSTVKTFTLYLDQIATLIGQTRLRIIKLCGNDPDKIVVPLTKEQVRQAFINSGAWQIGLANFVGIIDNHYPKTKIFQFLKLTTWILPKITRREPLENALTVFTDGSSNGKAAYTGPKERVIKTPYQSAQRAELVAVITVLQDFDQPINIISDSAYVVQATRVVETALIKYSMDDQLNQLFNLLQQTVRKRNFPFYITHIRAHTNLPGPLTKANEQADLLVSSALIKAQELHALTHVNAAGLKNKFDVTWKQAKDIVQHCTQCQVLHLPTQEAGVNPRGLCPNALWQMDVTHVPSFGRLSYVHVTVDTYSHFIWATCQTGESTSHVKKHLLSCFAVMGVPEKIKTDNGPGYCSKAFQKFLSQWKISHTTGIPYNSQGQAIVERTNRTLKTQLVKQKEGGDSKECTTPQMQLNLALYTLNFLNIYRNQTTTSAEQHLTGKKNSPHEGKLIWWKDNKNKTWEIGKVITWGRGFACVSPGENQLPVWIPTRHLKFYNEPIRDAKKSTSAETETPQSSTVDSQDEQNGDVRRTDEVAIHQEGRAADLGTTKEADAVSYKISREHKGDTNPREYAACSLDDCINGGKSPYACRSSCS.

One can recognise a Reverse transcriptase domain in the interval 57–245; the sequence is LEKGHIEPSF…TPFHYLGMQI (189 aa). The short motif at 161-164 is the LPQG element; it reads LPQG. Positions 195-198 match the YXDD motif; it reads YIDD. The region spanning 460–590 is the RNase H type-1 domain; that stretch reads LENALTVFTD…ADLLVSSALI (131 aa). Mg(2+) is bound by residues aspartate 469, glutamate 497, aspartate 517, and aspartate 582. The segment at 587 to 628 adopts an Integrase-type zinc-finger fold; it reads SALIKAQELHALTHVNAAGLKNKFDVTWKQAKDIVQHCTQCQ. Zn(2+) is bound by residues histidine 596, histidine 600, cysteine 624, and cysteine 627. Positions 642–803 constitute an Integrase catalytic domain; that stretch reads RGLCPNALWQ…TSAEQHLTGK (162 aa). Residues 811-859 constitute a DNA-binding region (integrase-type); sequence KLIWWKDNKNKTWEIGKVITWGRGFACVSPGENQLPVWIPTRHLKFYNE. The tract at residues 864–890 is disordered; the sequence is AKKSTSAETETPQSSTVDSQDEQNGDV. A compositionally biased stretch (polar residues) spans 869–881; it reads SAETETPQSSTVD.

The protein belongs to the beta type-B retroviral polymerase family. HERV class-II K(HML-2) pol subfamily.

It catalyses the reaction DNA(n) + a 2'-deoxyribonucleoside 5'-triphosphate = DNA(n+1) + diphosphate. The enzyme catalyses Endonucleolytic cleavage to 5'-phosphomonoester.. Early post-infection, the reverse transcriptase converts the viral RNA genome into double-stranded viral DNA. The RNase H domain of the reverse transcriptase performs two functions. It degrades the RNA template and specifically removes the RNA primer from the RNA/DNA hybrid. Following nuclear import, the integrase catalyzes the insertion of the linear, double-stranded viral DNA into the host cell chromosome. Endogenous Pol proteins may have kept, lost or modified their original function during evolution. This chain is Endogenous retrovirus group K member 8 Pol protein (ERVK-8), found in Homo sapiens (Human).